The following is a 377-amino-acid chain: Flap endonuclease 1 (377 aa).

The N-domain stretch occupies residues 1–105 (MGIKGLSQVI…GELAKRASRQ (105 aa)). Mg(2+) is bound at residue Asp-34. Arg-47 and Arg-71 together coordinate DNA. Asp-87 contributes to the Mg(2+) binding site. The segment at 96 to 115 (GELAKRASRQQKAREEREEA) is disordered. Positions 123 to 254 (MVDKFAKRTV…ARAVELIRQH (132 aa)) are I-domain. Mg(2+)-binding residues include Glu-159, Glu-161, Asp-180, and Asp-182. Glu-159 provides a ligand contact to DNA. DNA contacts are provided by Gly-232 and Asp-234. Residue Asp-234 participates in Mg(2+) binding. The tract at residues 337-345 (PQGRLDSFF) is interaction with PCNA. The disordered stretch occupies residues 350-377 (STKKEKEKPKAAAKRKRDTKSSAPKKKR). Basic residues predominate over residues 360 to 377 (AAAKRKRDTKSSAPKKKR).

Belongs to the XPG/RAD2 endonuclease family. FEN1 subfamily. As to quaternary structure, interacts with PCNA. Three molecules of rad2 bind to one PCNA trimer with each molecule binding to one PCNA monomer. PCNA stimulates the nuclease activity without altering cleavage specificity. The cofactor is Mg(2+). Phosphorylated. Phosphorylation upon DNA damage induces relocalization to the nuclear plasma.

It is found in the nucleus. The protein localises to the nucleolus. Its subcellular location is the nucleoplasm. The protein resides in the mitochondrion. Functionally, structure-specific nuclease with 5'-flap endonuclease and 5'-3' exonuclease activities involved in DNA replication and repair. During DNA replication, cleaves the 5'-overhanging flap structure that is generated by displacement synthesis when DNA polymerase encounters the 5'-end of a downstream Okazaki fragment. It enters the flap from the 5'-end and then tracks to cleave the flap base, leaving a nick for ligation. Also involved in the long patch base excision repair (LP-BER) pathway, by cleaving within the apurinic/apyrimidinic (AP) site-terminated flap. Acts as a genome stabilization factor that prevents flaps from equilibrating into structures that lead to duplications and deletions. Also possesses 5'-3' exonuclease activity on nicked or gapped double-stranded DNA, and exhibits RNase H activity. Also involved in replication and repair of rDNA and in repairing mitochondrial DNA. The polypeptide is Flap endonuclease 1 (Schizosaccharomyces japonicus (strain yFS275 / FY16936) (Fission yeast)).